Consider the following 435-residue polypeptide: Xylose isomerase (435 aa).

Aspartate 306 and aspartate 308 together coordinate Mg(2+).

It belongs to the xylose isomerase family. Homotetramer. Mg(2+) is required as a cofactor.

It is found in the cytoplasm. It catalyses the reaction alpha-D-xylose = alpha-D-xylulofuranose. The sequence is that of Xylose isomerase from Allorhizobium ampelinum (strain ATCC BAA-846 / DSM 112012 / S4) (Agrobacterium vitis (strain S4)).